We begin with the raw amino-acid sequence, 430 residues long: Glutamate-1-semialdehyde 2,1-aminomutase (430 aa).

Lysine 265 is modified (N6-(pyridoxal phosphate)lysine).

This sequence belongs to the class-III pyridoxal-phosphate-dependent aminotransferase family. HemL subfamily. As to quaternary structure, homodimer. Pyridoxal 5'-phosphate serves as cofactor.

It localises to the cytoplasm. It carries out the reaction (S)-4-amino-5-oxopentanoate = 5-aminolevulinate. Its pathway is porphyrin-containing compound metabolism; protoporphyrin-IX biosynthesis; 5-aminolevulinate from L-glutamyl-tRNA(Glu): step 2/2. The chain is Glutamate-1-semialdehyde 2,1-aminomutase from Shewanella sp. (strain MR-4).